The sequence spans 179 residues: Plasmid-derived single-stranded DNA-binding protein (179 aa).

Residues 6–110 (INKVILVGRL…ILVKTTGTMQ (105 aa)) form the SSB domain. A DNA-binding region spans residues 55-61 (WHRVVLF). The tract at residues 117-179 (GAQTQPEEGQ…DYGFSDDIPF (63 aa)) is disordered. The segment covering 118–132 (AQTQPEEGQQFSGQP) has biased composition (polar residues). Positions 145–155 (GGAKTKGRGRK) are enriched in basic residues. Residues 167-179 (EGDDYGFSDDIPF) are compositionally biased toward acidic residues.

In terms of assembly, homotetramer.

May contribute to the conjugative processing of DNA. It has a functional relationship with Psi (plasmid-mediated sos inhibition) proteins. The sequence is that of Plasmid-derived single-stranded DNA-binding protein (ssbF) from Escherichia coli (strain K12).